Consider the following 103-residue polypeptide: Co-chaperonin GroES (103 aa).

It belongs to the GroES chaperonin family. Heptamer of 7 subunits arranged in a ring. Interacts with the chaperonin GroEL.

The protein localises to the cytoplasm. Together with the chaperonin GroEL, plays an essential role in assisting protein folding. The GroEL-GroES system forms a nano-cage that allows encapsulation of the non-native substrate proteins and provides a physical environment optimized to promote and accelerate protein folding. GroES binds to the apical surface of the GroEL ring, thereby capping the opening of the GroEL channel. This Picosynechococcus sp. (strain ATCC 27264 / PCC 7002 / PR-6) (Agmenellum quadruplicatum) protein is Co-chaperonin GroES.